A 287-amino-acid chain; its full sequence is Ribosomal RNA small subunit methyltransferase A (287 aa).

S-adenosyl-L-methionine is bound by residues N18, L20, G45, E66, D91, and N118.

It belongs to the class I-like SAM-binding methyltransferase superfamily. rRNA adenine N(6)-methyltransferase family. RsmA subfamily.

The protein localises to the cytoplasm. The enzyme catalyses adenosine(1518)/adenosine(1519) in 16S rRNA + 4 S-adenosyl-L-methionine = N(6)-dimethyladenosine(1518)/N(6)-dimethyladenosine(1519) in 16S rRNA + 4 S-adenosyl-L-homocysteine + 4 H(+). Its function is as follows. Specifically dimethylates two adjacent adenosines (A1518 and A1519) in the loop of a conserved hairpin near the 3'-end of 16S rRNA in the 30S particle. May play a critical role in biogenesis of 30S subunits. In Haemophilus influenzae (strain ATCC 51907 / DSM 11121 / KW20 / Rd), this protein is Ribosomal RNA small subunit methyltransferase A.